The chain runs to 327 residues: Geranylgeranyl transferase type-2 subunit alpha (327 aa).

5 PFTA repeats span residues 44-78 (YSIEALKKTSELLEKNPEFNAIWNYRRDIIASLAS), 84-118 (FWDKELVFVMMLLKDYPKVYWIWNHRLWVLKHYPT), 123-157 (VWQTELAVVNKLLEQDARNYHGWHYRRIVVGNIES), 163-197 (LDKEEFEYTTIKINNNISNYSAWHQRVQIISRMFQ), and 207-241 (YIRTEISYIINAMFTDAEDQSVWFYIKWFIKNDIV).

It belongs to the protein prenyltransferase subunit alpha family. Heterodimer of an alpha and a beta subunit.

It carries out the reaction geranylgeranyl diphosphate + L-cysteinyl-[protein] = S-geranylgeranyl-L-cysteinyl-[protein] + diphosphate. Catalyzes the transfer of a geranyl-geranyl moiety from geranyl-geranyl pyrophosphate to proteins having the C-terminal -XCC or -XCXC, where both cysteines may become modified. Acts on YPT1 and SEC4. The chain is Geranylgeranyl transferase type-2 subunit alpha (BET4) from Saccharomyces cerevisiae (strain ATCC 204508 / S288c) (Baker's yeast).